The primary structure comprises 482 residues: Glutamyl-tRNA(Gln) amidotransferase subunit A (482 aa).

Residues lysine 81 and serine 156 each act as charge relay system in the active site. Serine 180 acts as the Acyl-ester intermediate in catalysis.

This sequence belongs to the amidase family. GatA subfamily. As to quaternary structure, heterotrimer of A, B and C subunits.

The enzyme catalyses L-glutamyl-tRNA(Gln) + L-glutamine + ATP + H2O = L-glutaminyl-tRNA(Gln) + L-glutamate + ADP + phosphate + H(+). In terms of biological role, allows the formation of correctly charged Gln-tRNA(Gln) through the transamidation of misacylated Glu-tRNA(Gln) in organisms which lack glutaminyl-tRNA synthetase. The reaction takes place in the presence of glutamine and ATP through an activated gamma-phospho-Glu-tRNA(Gln). The sequence is that of Glutamyl-tRNA(Gln) amidotransferase subunit A from Brachyspira hyodysenteriae (strain ATCC 49526 / WA1).